Here is a 104-residue protein sequence, read N- to C-terminus: Large ribosomal subunit protein eL42 (104 aa).

A disordered region spans residues 22–56 (KVSQAKKSKDNPRAQGNRRYARKQRGYGGQTKPIL).

Belongs to the eukaryotic ribosomal protein eL42 family.

The sequence is that of Large ribosomal subunit protein eL42 (RPL44) from Encephalitozoon cuniculi (strain GB-M1) (Microsporidian parasite).